Reading from the N-terminus, the 504-residue chain is MHWSESLLKDVSGDQRISTGISPSGPIHIGNMREILTGDIIYKEALKLGIKASFIYLCDDMDPLRKVYPFLPGSYERYVGHPLSMIPAPDGDKTYSEYFLEPFKETIDKIDVRPEIISTTSLYKNGVLSRAIDIAMNNREKIKNILNSIGNYKITGDWYPYEPVCKSCGRINTTTVISYNYPYAEYKCKCGYTGKADIRTDDGKMPWRVEWPAKWFSLHVTIEPFGKDHGAAGGSYDTGKAIASDIFNINPPLPLLYERIFLKGKGVMHSSTGVVIPASEMIKFSPPEIIRFLIAKNNPGRHIDFDPGPGLLNLIDEYEKYERAYFGLDSVKDDDYKEVYELSRLKILKEPEKITFRHIVTLVQIYNNNDALLSALKRSGYEKDYIDDYIMNEIDTARYWLEKYAPPEMKFSLTDENINLNDDERKIVNEFLENIDNIEWSPDSIHNYVYDIIGRSKMRPQDAFAVFYKILIGRSRGPRLGYFIYNLGREYIIKRFSSILAETF.

A 'HIGH' region motif is present at residues 23-31 (PSGPIHIGN).

The protein belongs to the class-I aminoacyl-tRNA synthetase family.

The protein localises to the cytoplasm. It catalyses the reaction tRNA(Lys) + L-lysine + ATP = L-lysyl-tRNA(Lys) + AMP + diphosphate. This chain is Lysine--tRNA ligase, found in Picrophilus torridus (strain ATCC 700027 / DSM 9790 / JCM 10055 / NBRC 100828 / KAW 2/3).